Here is a 169-residue protein sequence, read N- to C-terminus: Inorganic pyrophosphatase (169 aa).

3 residues coordinate substrate: lysine 26, arginine 40, and tyrosine 52. Residues aspartate 62, aspartate 67, and aspartate 99 each coordinate Mg(2+). Tyrosine 138 provides a ligand contact to substrate.

The protein belongs to the PPase family. As to quaternary structure, homohexamer. It depends on Mg(2+) as a cofactor.

The protein localises to the cytoplasm. It carries out the reaction diphosphate + H2O = 2 phosphate + H(+). Functionally, catalyzes the hydrolysis of inorganic pyrophosphate (PPi) forming two phosphate ions. The protein is Inorganic pyrophosphatase of Thermoplasma volcanium (strain ATCC 51530 / DSM 4299 / JCM 9571 / NBRC 15438 / GSS1).